Here is a 346-residue protein sequence, read N- to C-terminus: Ribonucleoside-diphosphate reductase subunit beta (346 aa).

Positions 89, 120, and 123 each coordinate Fe cation. The active site involves Tyr-129. Positions 193, 227, and 230 each coordinate Fe cation.

This sequence belongs to the ribonucleoside diphosphate reductase small chain family. As to quaternary structure, tetramer of two alpha and two beta subunits. Fe cation is required as a cofactor.

It carries out the reaction a 2'-deoxyribonucleoside 5'-diphosphate + [thioredoxin]-disulfide + H2O = a ribonucleoside 5'-diphosphate + [thioredoxin]-dithiol. Its function is as follows. Provides the precursors necessary for DNA synthesis. Catalyzes the biosynthesis of deoxyribonucleotides from the corresponding ribonucleotides. The polypeptide is Ribonucleoside-diphosphate reductase subunit beta (nrdB) (Chlamydia pneumoniae (Chlamydophila pneumoniae)).